Here is a 147-residue protein sequence, read N- to C-terminus: Hemoglobin subunit gamma (147 aa).

A Globin domain is found at 3 to 147 (NFTAEDKAAI…VASALGSRYH (145 aa)). Residues histidine 64 and histidine 93 each coordinate heme b.

The protein belongs to the globin family. In terms of assembly, heterotetramer of two alpha chains and two gamma chains in fetal hemoglobin (Hb F). Red blood cells.

Gamma chains make up the fetal hemoglobin F, in combination with alpha chains. This chain is Hemoglobin subunit gamma (HBG), found in Aotus azarae (Azara's night monkey).